We begin with the raw amino-acid sequence, 361 residues long: Chorismate synthase (361 aa).

The NADP(+) site is built by Arg48 and Arg54. Residues 125 to 127 (RSS), 240 to 241 (NA), Gly286, 301 to 305 (KPTSS), and Arg327 each bind FMN.

The protein belongs to the chorismate synthase family. As to quaternary structure, homotetramer. It depends on FMNH2 as a cofactor.

The enzyme catalyses 5-O-(1-carboxyvinyl)-3-phosphoshikimate = chorismate + phosphate. It functions in the pathway metabolic intermediate biosynthesis; chorismate biosynthesis; chorismate from D-erythrose 4-phosphate and phosphoenolpyruvate: step 7/7. Functionally, catalyzes the anti-1,4-elimination of the C-3 phosphate and the C-6 proR hydrogen from 5-enolpyruvylshikimate-3-phosphate (EPSP) to yield chorismate, which is the branch point compound that serves as the starting substrate for the three terminal pathways of aromatic amino acid biosynthesis. This reaction introduces a second double bond into the aromatic ring system. This is Chorismate synthase from Magnetococcus marinus (strain ATCC BAA-1437 / JCM 17883 / MC-1).